The sequence spans 423 residues: Putative competence-damage inducible protein (423 aa).

Belongs to the CinA family.

This is Putative competence-damage inducible protein from Streptococcus pyogenes serotype M1.